A 244-amino-acid polypeptide reads, in one-letter code: Probable transcriptional regulatory protein CHAB381_1426 (244 aa).

Belongs to the TACO1 family.

It localises to the cytoplasm. This chain is Probable transcriptional regulatory protein CHAB381_1426, found in Campylobacter hominis (strain ATCC BAA-381 / DSM 21671 / CCUG 45161 / LMG 19568 / NCTC 13146 / CH001A).